The chain runs to 447 residues: Innexin-5 (447 aa).

4 helical membrane passes run 30 to 47, 108 to 128, 198 to 218, and 283 to 303; these read TSTL…SQYV, QWIP…SIIW, ALYL…FWIL, and VYVF…CSLA. Positions 389-447 are disordered; that stretch reads KKDDDSALPASAPVDLQEDDDDDTPFPPPTKAVAETLTSDDEEEETDVDSPDTTATLPR. Residues 426–438 show a composition bias toward acidic residues; that stretch reads TSDDEEEETDVDS.

Belongs to the pannexin family.

Its subcellular location is the cell membrane. The protein localises to the cell junction. The protein resides in the gap junction. Functionally, structural component of the gap junctions. In Caenorhabditis elegans, this protein is Innexin-5 (inx-5).